A 234-amino-acid polypeptide reads, in one-letter code: MRSGEPACTMDQARGLDDAAARGGQCPGLGPAPTPTPPGRLGAPYSEAWGYFHLAPGRPGHPSGHWATCRLCGEQVGRGPGFHAGTSALWRHLRSAHRRELESSGAGSSPPAAPCPPPPGPAAAPEGDWARLLEQMGALAVRGSRRERELERRELAVEQGERALERRRRALQEEERAAAQARRELQAEREALQARLRDVSRREGALGWAPAAPPPLKDDPEGDRDGCVITKVLL.

The segment at Ala19 to Gly42 is disordered. The BED-type zinc-finger motif lies at Ala43 to Ser104. Zn(2+) is bound by residues Cys69, Cys72, His92, and His97. 2 disordered regions span residues Arg94–Glu126 and Arg202–Asp225. Over residues Pro111–Ala122 the composition is skewed to pro residues. Positions Leu216–Asp225 are enriched in basic and acidic residues.

Associates with the subcortical maternal complex (SCMC) composed of at least NLRP5, KHDC3L, OOEP, and TLE6 via interaction with NLRP5 and TLE6. Interacts with AXIN1; the interaction is direct, enhanced by protein kinase GSK3B and casein kinase CSNK1E activities and decreases GSK3B-induced beta-catenin serine and threonine phosphorylations. In terms of tissue distribution, secreted in blood plasma, and expressed in skeletal muscle and adipose tissue (at protein level).

Its subcellular location is the cytoplasm. The protein resides in the membrane. The protein localises to the secreted. Functionally, acts as a positive regulator in the activation of the canonical Wnt/beta-catenin signaling pathway by stabilizing cytoplasmic beta-catenin. Involved in transcription activation of Wnt target gene expression. Plays a role in symmetric division of blastomeres in the early stages of embryogenesis via regulation of mitotic spindle central positioning and organization of the F-actin filament network. Plays a role in regulating the distribution of cellular organelles, via modulation of cytoskeletal dynamics and cytoplasmic lattice formation. The sequence is that of Zinc finger BED domain-containing protein 3 (ZBED3) from Homo sapiens (Human).